We begin with the raw amino-acid sequence, 727 residues long: UvrABC system protein C (727 aa).

In terms of domain architecture, GIY-YIG spans 16-95 (VDPGVYKFRD…IKEFDPRFNV (80 aa)). Residues 208–243 (DRLVRQLEARMQEASEELDFETAARLRDDVGALRRA) enclose the UVR domain. 2 disordered regions span residues 503–527 (DADQ…QTGR) and 679–727 (SADV…TGVE). Over residues 701-711 (NGADIPREPVE) the composition is skewed to basic and acidic residues. Residues 718–727 (QSASQRTGVE) are compositionally biased toward polar residues.

This sequence belongs to the UvrC family. In terms of assembly, interacts with UvrB in an incision complex.

It is found in the cytoplasm. The UvrABC repair system catalyzes the recognition and processing of DNA lesions. UvrC both incises the 5' and 3' sides of the lesion. The N-terminal half is responsible for the 3' incision and the C-terminal half is responsible for the 5' incision. The polypeptide is UvrABC system protein C (Rhodococcus jostii (strain RHA1)).